Here is a 291-residue protein sequence, read N- to C-terminus: Hydroxysteroid 11-beta-dehydrogenase 1-like protein A (291 aa).

The N-terminal stretch at 1–18 is a signal peptide; that stretch reads MAGVKLLLLSLCVGYTAY. Residues 40–66, 91–92, and 118–120 contribute to the NADP(+) site; these read GSST…TARR, DM, and NHI. Substrate is bound at residue S170. Y183 functions as the Proton acceptor in the catalytic mechanism. NADP(+)-binding positions include 183–187 and 216–222; these read YCASK and GYIDTEN.

This sequence belongs to the short-chain dehydrogenases/reductases (SDR) family.

It is found in the secreted. It catalyses the reaction cortisone + NADPH + H(+) = cortisol + NADP(+). In terms of biological role, unidirectional NADP(+)-dependent cortisol dehydrogenase (in vitro). This Xenopus laevis (African clawed frog) protein is Hydroxysteroid 11-beta-dehydrogenase 1-like protein A (hsd11b1l-a).